Here is a 213-residue protein sequence, read N- to C-terminus: 3,4-dihydroxy-2-butanone 4-phosphate synthase (213 aa).

Residues 27-28, aspartate 32, 140-144, and glutamate 164 each bind D-ribulose 5-phosphate; these read RE and RTGHT. Glutamate 28 is a binding site for Mg(2+). Mg(2+) is bound at residue histidine 143.

Belongs to the DHBP synthase family. In terms of assembly, homodimer. It depends on Mg(2+) as a cofactor. Requires Mn(2+) as cofactor.

The catalysed reaction is D-ribulose 5-phosphate = (2S)-2-hydroxy-3-oxobutyl phosphate + formate + H(+). It functions in the pathway cofactor biosynthesis; riboflavin biosynthesis; 2-hydroxy-3-oxobutyl phosphate from D-ribulose 5-phosphate: step 1/1. Functionally, catalyzes the conversion of D-ribulose 5-phosphate to formate and 3,4-dihydroxy-2-butanone 4-phosphate. The sequence is that of 3,4-dihydroxy-2-butanone 4-phosphate synthase from Agrobacterium fabrum (strain C58 / ATCC 33970) (Agrobacterium tumefaciens (strain C58)).